Here is a 151-residue protein sequence, read N- to C-terminus: HTH-type transcriptional regulator FL11 (151 aa).

The region spanning 5 to 66 (LDEIDKKIIK…IIDPEALGYS (62 aa)) is the HTH asnC-type domain. The H-T-H motif DNA-binding region spans 24 to 43 (LREISKITGLAESTIHERIR). 98-104 (ETTGDYD) serves as a coordination point for L-arginine. Residues N118, D122, and 133 to 135 (THT) contribute to the L-lysine site. Residues D122 and 133–135 (THT) contribute to the L-arginine site.

As to quaternary structure, homodimer. Binds DNA as a dimer and an octamer. The octamer formed with lysine is stable in solution, but the octamer formed with arginine is unstable without DNA. When crystallized in the absence of DNA, dimers are assembled into helical cylinders with six dimers per turn. In solution, predominantly behaves as a dimer.

In the famine mode, FL11 forms dimers and acts as a repressor, leading to growth arrest. In the feast mode, in the presence of high concentrations of lysine or arginine, four dimers assemble into an octamer and cover the fl11 and lysine biosynthesis promoters. This leads to the inhibition of fl11 expression and lysine biosynthesis, decrease of the FL11 concentration in the cell, derepression of the target genes and activation of the metabolism. DNA-binding protein involved in the repression of transcription of a large number of genes, thereby arresting growth, in response to environmental changes. Binding sites are identified in promoters of approximately 200 transcription units, including genes involved in ATP synthesis, transmembrane transport, translation and DNA synthesis. The polypeptide is HTH-type transcriptional regulator FL11 (Pyrococcus horikoshii (strain ATCC 700860 / DSM 12428 / JCM 9974 / NBRC 100139 / OT-3)).